Here is a 247-residue protein sequence, read N- to C-terminus: HTH-type transcriptional regulator SarU (247 aa).

2 DNA-binding regions (H-T-H motif) span residues 53–76 (LKEIIGDILYKQSDVVKNIKSLSK) and 178–201 (LKDLFESIRFMYPQIVRSVNRLNN).

Belongs to the SarA family.

It is found in the cytoplasm. Functionally, positive regulator of RNAII and RNAIII in a cell density-dependent manner. It can contribute to the expression of virulence genes controlled by agr. May also regulate target genes via an agr-independent pathway. This Staphylococcus aureus (strain NCTC 8325 / PS 47) protein is HTH-type transcriptional regulator SarU (sarU).